Here is a 67-residue protein sequence, read N- to C-terminus: Protein AaeX (67 aa).

2 consecutive transmembrane segments (helical) span residues 3-23 and 43-63; these read VLPV…EIIV and LVWH…YVVS.

Belongs to the AaeX family.

The protein localises to the cell membrane. This Erwinia tasmaniensis (strain DSM 17950 / CFBP 7177 / CIP 109463 / NCPPB 4357 / Et1/99) protein is Protein AaeX.